The chain runs to 601 residues: Serine/threonine-protein phosphatase 2A 65 kDa regulatory subunit A beta isoform (601 aa).

Residue Ala-2 is modified to N-acetylalanine. HEAT repeat units follow at residues 20–58, 59–96, 97–135, 136–173, 174–212, 213–251, 252–290, 291–333, 334–372, 373–411, 412–450, 451–489, 490–528, 529–567, and 568–601; these read DSLY…GVER, TRTE…GGPD, FAHC…TPVA, LEAH…ASNA, VKAE…ELDS, VKTE…SQDD, LEAL…GPKI, ALSD…RETV, IMNQ…GKEN, TIEH…GIRQ, LSQS…GVEF, FDEK…GTEW, AQNT…GKEI, TTKQ…DTNA, and LQGE…LALA.

It belongs to the phosphatase 2A regulatory subunit A family. As to quaternary structure, PP2A consists of a common heterodimeric core enzyme, composed of a 36 kDa catalytic subunit (subunit C) and a 65 kDa constant regulatory subunit (PR65 or subunit A), that associates with a variety of regulatory subunits. Proteins that associate with the core dimer include three families of regulatory subunits B (the R2/B/PR55/B55, R3/B''/PR72/PR130/PR59 and R5/B'/B56 families), the 48 kDa variable regulatory subunit, viral proteins, and cell signaling molecules. Interacts with IPO9. Interacts with SGO1. Interacts with RAF1.

The PR65 subunit of protein phosphatase 2A serves as a scaffolding molecule to coordinate the assembly of the catalytic subunit and a variable regulatory B subunit. This Rattus norvegicus (Rat) protein is Serine/threonine-protein phosphatase 2A 65 kDa regulatory subunit A beta isoform (Ppp2r1b).